The sequence spans 303 residues: Oxygen-dependent coproporphyrinogen-III oxidase (303 aa).

Ser94 lines the substrate pocket. A divalent metal cation-binding residues include His98 and His108. The active-site Proton donor is His108. 110–112 is a binding site for substrate; sequence NVR. A divalent metal cation is bound by residues His147 and His177. An important for dimerization region spans residues 242 to 277; sequence YVEFNLVYDRGTLFGLQTGGRTESILMSLPPLVRWE. Position 260 to 262 (260 to 262) interacts with substrate; sequence GGR.

Belongs to the aerobic coproporphyrinogen-III oxidase family. As to quaternary structure, homodimer. The cofactor is a divalent metal cation.

It localises to the cytoplasm. The enzyme catalyses coproporphyrinogen III + O2 + 2 H(+) = protoporphyrinogen IX + 2 CO2 + 2 H2O. Its pathway is porphyrin-containing compound metabolism; protoporphyrin-IX biosynthesis; protoporphyrinogen-IX from coproporphyrinogen-III (O2 route): step 1/1. Involved in the heme biosynthesis. Catalyzes the aerobic oxidative decarboxylation of propionate groups of rings A and B of coproporphyrinogen-III to yield the vinyl groups in protoporphyrinogen-IX. The protein is Oxygen-dependent coproporphyrinogen-III oxidase of Saccharophagus degradans (strain 2-40 / ATCC 43961 / DSM 17024).